The sequence spans 250 residues: Probable aquaporin TIP1-1 (250 aa).

2 consecutive transmembrane segments (helical) span residues 25–44 and 58–77; these read AEFI…GMAF and LIAA…SVGA. The short motif at 85-87 is the NPA 1 element; sequence NPA. The next 3 membrane-spanning stretches (helical) occupy residues 103–121, 144–163, and 170–192; these read GLLY…CFLL, LVLE…ATAV, and LGTI…GGAF. The NPA 2 signature appears at 198 to 200; the sequence is NPA. The helical transmembrane segment at 216–233 threads the bilayer; the sequence is WVYWVGPLIGGGLAGVIY.

The protein belongs to the MIP/aquaporin (TC 1.A.8) family. TIP (TC 1.A.8.10) subfamily. In terms of tissue distribution, expressed in roots and leaves.

It localises to the vacuole membrane. Functionally, aquaporins facilitate the transport of water and small neutral solutes across cell membranes. May be involved in transport from the vacuolar compartment to the cytoplasm. This is Probable aquaporin TIP1-1 (TIP1-1) from Oryza sativa subsp. japonica (Rice).